Here is a 1588-residue protein sequence, read N- to C-terminus: Multicopy suppressor of chk1 protein 1 (1588 aa).

Residues 38–60 (HAKPSTQQQQQQQNISNETTSTG) form a disordered region. Residues 51-60 (NISNETTSTG) are compositionally biased toward polar residues. A JmjN domain is found at 82–124 (NVRVTPKKEEFSRGLDFISDLYDQTARKSGAVRVIPPDNWKCP). A PHD-type 1 zinc finger spans residues 298-345 (KCKLCAQEGSSLVTCCICQSNYHYACVEAPFAPFSDIHYWTCNSCIPS). Positions 385–395 (PLTLPSNTKTP) are enriched in polar residues. Positions 385–412 (PLTLPSNTKTPPASARQSSRRTRSTSGK) are disordered. Residues 475–645 (FPTSRQNAYY…DMHAENSFNM (171 aa)) form the JmjC domain. A disordered region spans residues 848-872 (EKRKPKRGSATHSHLESPSEEVEDL). The PHD-type 2 zinc finger occupies 1171-1220 (FHYCFCRQPEAGMMIECELCHEWYHAKCMKMSKKKLRADEKFICPICDYR). Residues 1319 to 1341 (APQPPPFIGESRSNRKPRPTKRQ) form a disordered region. The segment at 1454-1505 (SVICLCRQPFAISDGTVQCHNCLEWFHYECVGLSSDIVSTLSNYACPDCCSK) adopts a PHD-type 3 zinc-finger fold.

Its subcellular location is the nucleus. Its function is as follows. Has a role in regulating chromatin structure via global deacetylation of histone H3. This function is associated with the activity of a histone deacetylase. The protein is Multicopy suppressor of chk1 protein 1 (msc1) of Schizosaccharomyces pombe (strain 972 / ATCC 24843) (Fission yeast).